The chain runs to 228 residues: Phosphoglycolate phosphatase (228 aa).

Asp-9 (nucleophile) is an active-site residue. Mg(2+) is bound by residues Asp-9 and Asp-11. Lys-151 provides a ligand contact to substrate. Mg(2+)-binding residues include Asp-174 and Asp-178.

The protein belongs to the archaeal SPP-like hydrolase family. Mg(2+) is required as a cofactor.

The catalysed reaction is 2-phosphoglycolate + H2O = glycolate + phosphate. Its function is as follows. Catalyzes the dephosphorylation of 2-phosphoglycolate. The protein is Phosphoglycolate phosphatase of Pyrobaculum neutrophilum (strain DSM 2338 / JCM 9278 / NBRC 100436 / V24Sta) (Thermoproteus neutrophilus).